The following is a 316-amino-acid chain: PDZ and LIM domain protein 3 (316 aa).

One can recognise a PDZ domain in the interval 1-84 (MPQNVVLPGP…QLCLKIDRAE (84 aa)). 2 positions are modified to phosphoserine: Ser-18 and Ser-93. Arg-164 is subject to Omega-N-methylarginine. The region spanning 244-303 (PLCDKCGSGIVGAVVKARDKYRHPECFVCADCNLNLKQKGYFFVEGELYCETHARARTRP) is the LIM zinc-binding domain.

As to quaternary structure, interacts with ACTN2. Forms a heterodimer with PDLIM4 (via LIM domain).

The protein resides in the cytoplasm. It localises to the myofibril. The protein localises to the sarcomere. It is found in the z line. Its function is as follows. May play a role in the organization of actin filament arrays within muscle cells. The chain is PDZ and LIM domain protein 3 (Pdlim3) from Mus musculus (Mouse).